The chain runs to 200 residues: Recombination protein RecR (200 aa).

Residues 59–74 (CEICGNIDTRSPCTVC) form a C4-type zinc finger. Residues 82–177 (SIIVVVADVA…KVTRLAHGVP (96 aa)) enclose the Toprim domain.

Belongs to the RecR family.

May play a role in DNA repair. It seems to be involved in an RecBC-independent recombinational process of DNA repair. It may act with RecF and RecO. This chain is Recombination protein RecR, found in Nitrobacter hamburgensis (strain DSM 10229 / NCIMB 13809 / X14).